Reading from the N-terminus, the 368-residue chain is WAT1-related protein At5g40240 (368 aa).

Helical transmembrane passes span 18 to 38 (VVPF…NTLF), 50 to 70 (VFVF…SVIF), 82 to 102 (PLFF…IAGC), 111 to 131 (TLAS…AVIF), 142 to 162 (ATQA…VVVL), 194 to 214 (WIIG…WYIL), 226 to 246 (ITVV…VCLF), 260 to 280 (ISLA…ALTH), 292 to 312 (ISLF…IFLG), and 315 to 335 (LHLG…TVIW). 2 consecutive EamA domains span residues 33–161 (GSNT…LVVV) and 208–334 (ISVW…YTVI).

Belongs to the drug/metabolite transporter (DMT) superfamily. Plant drug/metabolite exporter (P-DME) (TC 2.A.7.4) family.

It is found in the membrane. In Arabidopsis thaliana (Mouse-ear cress), this protein is WAT1-related protein At5g40240.